The chain runs to 658 residues: Secretin XcpQ (658 aa).

Positions 1–34 (MSQPLLRALFAPSSRSYVPAVLLSLALGIQAAHA) are cleaved as a signal peptide. Positions 51-141 (AHWTINLKDA…TEAGGGQSAP (91 aa)) are N0. The segment at 142–205 (DRLETRVIQV…DVIRQLDQKG (64 aa)) is N1. The N2 stretch occupies residues 206–279 (SHDYSVINLR…SLDTPTARSA (74 aa)). The tract at residues 280–365 (NTRVIRLRHN…VPRAQVLVEA (86 aa)) is N3. The segment at 302–322 (SEGMKNNGGQGGEQTGGGRPS) is disordered. Residues 307–320 (NNGGQGGEQTGGGR) are compositionally biased toward gly residues. A secretin region spans residues 368–606 (VEISGDIQDA…VFLRPTVVRD (239 aa)). Positions 608 to 658 (AGLAALSGKKYSDIRVIDGTRGPEGRPSILPTNANQLFDGQAVDLRELMTE) are s domain.

It belongs to the bacterial secretin family. GSP D subfamily. In terms of assembly, forms a cylindrical channel with 15 subunits. The closed pentadecameric channel is 170 Angstroms long and 140 Angstroms in diameter.

The protein resides in the cell outer membrane. Involved in a type II secretion system (T2SS, formerly general secretion pathway, GSP) for the export of proteins. This subunit forms the outer membrane channel. Among its substrates are PrpL, elastase LasB, chitin binding protein D (CbpD), aminopeptidase PaAP, and metalloprotease ImpA. The sequence is that of Secretin XcpQ from Pseudomonas aeruginosa (strain ATCC 15692 / DSM 22644 / CIP 104116 / JCM 14847 / LMG 12228 / 1C / PRS 101 / PAO1).